The sequence spans 155 residues: MGLQEDFEEYAEKVKTLPESTSNEDKLILYGLYKQATVGDVNTSRPGIFAQRDRAKWDAWKAVEGKSKEEAMSDYITKVKQLQEEAAALKAVFRAYLVGEMNIFECHIGRLTRCRRGFRTQMKKQIVYSPGTREMNLLSLIKPSLAHVGYCSTYG.

An ACB domain is found at 3–88; sequence LQEDFEEYAE…VKQLQEEAAA (86 aa). An acyl-CoA-binding positions include Lys15, 30-34, Lys56, and Tyr75; that span reads YGLYK.

Belongs to the ACBP family. As to expression, highly expressed in leaves. Expressed at low levels in roots and seeds.

The protein resides in the cytoplasm. It is found in the cytosol. Binds medium- and long-chain acyl-CoA esters with high affinity. Can interact in vitro with linolenoyl-CoA. Binds phosphatidic acid (PA) and phosphatidylcholine (PC) in vitro. May play a role in the biosynthesis of phospholipids. This Oryza sativa subsp. japonica (Rice) protein is Acyl-CoA-binding domain-containing protein 3.